The sequence spans 498 residues: Probable cytosol aminopeptidase (498 aa).

K267 and D272 together coordinate Mn(2+). The active site involves K279. 3 residues coordinate Mn(2+): D290, D349, and E351. Residue R353 is part of the active site.

It belongs to the peptidase M17 family. The cofactor is Mn(2+).

The protein resides in the cytoplasm. It catalyses the reaction Release of an N-terminal amino acid, Xaa-|-Yaa-, in which Xaa is preferably Leu, but may be other amino acids including Pro although not Arg or Lys, and Yaa may be Pro. Amino acid amides and methyl esters are also readily hydrolyzed, but rates on arylamides are exceedingly low.. The enzyme catalyses Release of an N-terminal amino acid, preferentially leucine, but not glutamic or aspartic acids.. Functionally, presumably involved in the processing and regular turnover of intracellular proteins. Catalyzes the removal of unsubstituted N-terminal amino acids from various peptides. The polypeptide is Probable cytosol aminopeptidase (Dechloromonas aromatica (strain RCB)).